Reading from the N-terminus, the 403-residue chain is Phosphoglycerate kinase (403 aa).

Substrate is bound by residues D21 to N23, R36, H59 to R62, R119, and R154. ATP contacts are provided by residues K207, G299, E330, and G357–A360.

It belongs to the phosphoglycerate kinase family. As to quaternary structure, monomer.

The protein localises to the cytoplasm. The enzyme catalyses (2R)-3-phosphoglycerate + ATP = (2R)-3-phospho-glyceroyl phosphate + ADP. It functions in the pathway carbohydrate degradation; glycolysis; pyruvate from D-glyceraldehyde 3-phosphate: step 2/5. This Chlamydia trachomatis serovar L2 (strain ATCC VR-902B / DSM 19102 / 434/Bu) protein is Phosphoglycerate kinase.